Consider the following 491-residue polypeptide: Lysine--tRNA ligase 1 (491 aa).

Mg(2+)-binding residues include glutamate 400 and glutamate 407.

Belongs to the class-II aminoacyl-tRNA synthetase family. Homodimer. Mg(2+) serves as cofactor.

It localises to the cytoplasm. It catalyses the reaction tRNA(Lys) + L-lysine + ATP = L-lysyl-tRNA(Lys) + AMP + diphosphate. The protein is Lysine--tRNA ligase 1 of Mycoplasmopsis pulmonis (strain UAB CTIP) (Mycoplasma pulmonis).